A 160-amino-acid chain; its full sequence is Large ribosomal subunit protein uL15 (160 aa).

Residues 1 to 13 (MKLNEIRDNEGAR) are compositionally biased toward basic and acidic residues. A disordered region spans residues 1–41 (MKLNEIRDNEGARKSRIRVGRGIGSGKGKTGGRGVKGQKSR). Over residues 21 to 35 (RGIGSGKGKTGGRGV) the composition is skewed to gly residues.

The protein belongs to the universal ribosomal protein uL15 family. In terms of assembly, part of the 50S ribosomal subunit.

Binds to the 23S rRNA. The protein is Large ribosomal subunit protein uL15 of Parvibaculum lavamentivorans (strain DS-1 / DSM 13023 / NCIMB 13966).